The following is a 743-amino-acid chain: Phosphoribosylformylglycinamidine synthase subunit PurL (743 aa).

His54 is a catalytic residue. Residues Tyr57 and Lys96 each contribute to the ATP site. Residue Glu98 coordinates Mg(2+). Residues 99-102 (SHNH) and Arg121 each bind substrate. His100 serves as the catalytic Proton acceptor. Residue Asp122 participates in Mg(2+) binding. Gln245 serves as a coordination point for substrate. Asp273 serves as a coordination point for Mg(2+). Residue 317-319 (ESQ) participates in substrate binding. ATP-binding residues include Asp500 and Gly537. Mg(2+) is bound at residue Asn538. Position 540 (Ser540) interacts with substrate.

The protein belongs to the FGAMS family. As to quaternary structure, monomer. Part of the FGAM synthase complex composed of 1 PurL, 1 PurQ and 2 PurS subunits.

It localises to the cytoplasm. It catalyses the reaction N(2)-formyl-N(1)-(5-phospho-beta-D-ribosyl)glycinamide + L-glutamine + ATP + H2O = 2-formamido-N(1)-(5-O-phospho-beta-D-ribosyl)acetamidine + L-glutamate + ADP + phosphate + H(+). Its pathway is purine metabolism; IMP biosynthesis via de novo pathway; 5-amino-1-(5-phospho-D-ribosyl)imidazole from N(2)-formyl-N(1)-(5-phospho-D-ribosyl)glycinamide: step 1/2. Its function is as follows. Part of the phosphoribosylformylglycinamidine synthase complex involved in the purines biosynthetic pathway. Catalyzes the ATP-dependent conversion of formylglycinamide ribonucleotide (FGAR) and glutamine to yield formylglycinamidine ribonucleotide (FGAM) and glutamate. The FGAM synthase complex is composed of three subunits. PurQ produces an ammonia molecule by converting glutamine to glutamate. PurL transfers the ammonia molecule to FGAR to form FGAM in an ATP-dependent manner. PurS interacts with PurQ and PurL and is thought to assist in the transfer of the ammonia molecule from PurQ to PurL. In Bacillus pumilus (strain SAFR-032), this protein is Phosphoribosylformylglycinamidine synthase subunit PurL.